The primary structure comprises 198 residues: Uracil phosphoribosyltransferase homolog (198 aa).

It belongs to the UPRTase family.

The protein resides in the plastid. It is found in the chloroplast. This is Uracil phosphoribosyltransferase homolog from Porphyra purpurea (Red seaweed).